A 943-amino-acid polypeptide reads, in one-letter code: 2-oxoglutarate dehydrogenase E1 component (943 aa).

It belongs to the alpha-ketoglutarate dehydrogenase family. Homodimer. Part of the 2-oxoglutarate dehydrogenase (OGDH) complex composed of E1 (2-oxoglutarate dehydrogenase), E2 (dihydrolipoamide succinyltransferase) and E3 (dihydrolipoamide dehydrogenase); the complex contains multiple copies of the three enzymatic components (E1, E2 and E3). Thiamine diphosphate is required as a cofactor.

The enzyme catalyses N(6)-[(R)-lipoyl]-L-lysyl-[protein] + 2-oxoglutarate + H(+) = N(6)-[(R)-S(8)-succinyldihydrolipoyl]-L-lysyl-[protein] + CO2. Its function is as follows. E1 component of the 2-oxoglutarate dehydrogenase (OGDH) complex which catalyzes the decarboxylation of 2-oxoglutarate, the first step in the conversion of 2-oxoglutarate to succinyl-CoA and CO(2). This is 2-oxoglutarate dehydrogenase E1 component (sucA) from Azotobacter vinelandii.